Here is a 1771-residue protein sequence, read N- to C-terminus: MSVLISQSVINYVEEENIPALKALLEKCKDVDERNECGQTPLMIAAEQGNLEIVKELIKNGANCNLEDLDNWTALISASKEGHVHIVEELLKCGVNLEHRDMGGWTALMWACYKGRTDVVELLLSHGANPSVTGLYSVYPIIWAAGRGHADIVHLLLQNGAKVNCSDKYGTTPLVWAARKGHLECVKHLLAMGADVDQEGANSMTALIVAVKGGYTQSVKEILKRNPNVNLTDKDGNTALMIASKEGHTEIVQDLLDAGTYVNIPDRSGDTVLIGAVRGGHVEIVRALLQKYADIDIRGQDNKTALYWAVEKGNATMVRDILQCNPDTEICTKDGETPLIKATKMRNIEVVELLLDKGAKVSAVDKKGDTPLHIAIRGRSRKLAELLLRNPKDGRLLYRPNKAGETPYNIDCSHQKSILTQIFGARHLSPTETDGDMLGYDLYSSALADILSEPTMQPPICVGLYAQWGSGKSFLLKKLEDEMKTFAGQQIEPLFQFSWLIVFLTLLLCGGLGLLFAFTVHPNLGIAVSLSFLALLYIFFIVIYFGGRREGESWNWAWVLSTRLARHIGYLELLLKLMFVNPPELPEQTTKALPVRFLFTDYNRLSSVGGETSLAEMIATLSDACEREFGFLATRLFRVFKTEDTQGKKKWKKTCCLPSFVIFLFIIGCIISGITLLAIFRVDPKHLTVNAVLISIASVVGLAFVLNCRTWWQVLDSLLNSQRKRLHNAASKLHKLKSEGFMKVLKCEVELMARMAKTIDSFTQNQTRLVVIIDGLDACEQDKVLQMLDTVRVLFSKGPFIAIFASDPHIIIKAINQNLNSVLRDSNINGHDYMRNIVHLPVFLNSRGLSNARKFLVTSATNGDVPCSDTTGIQEDADRRVSQNSLGEMTKLGSKTALNRRDTYRRRQMQRTITRQMSFDLTKLLVTEDWFSDISPQTMRRLLNIVSVTGRLLRANQISFNWDRLASWINLTEQWPYRTSWLILYLEETEGIPDQMTLKTIYERISKNIPTTKDVEPLLEIDGDIRNFEVFLSSRTPVLVARDVKVFLPCTVNLDPKLREIIADVRAAREQISIGGLAYPPLPLHEGPPRAPSGYSQPPSVCSSTSFNGPFAGGVVSPQPHSSYYSGMTGPQHPFYNRPFFAPYLYTPRYYPGGSQHLISRPSVKTSLPRDQNNGLEVIKEDAAEGLSSPTDSSRGSGPAPGPVVLLNSLNVDAVCEKLKQIEGLDQSMLPQYCTTIKKANINGRVLAQCNIDELKKEMNMNFGDWHLFRSTVLEMRNAESHVVPEDPRFLSESSSGPAPHGEPARRASHNELPHTELSSQTPYTLNFSFEELNTLGLDEGAPRHSNLSWQSQTRRTPSLSSLNSQDSSIEISKLTDKVQAEYRDAYREYIAQMSQLEGGPGSTTISGRSSPHSTYYMGQSSSGGSIHSNLEQEKGKDSEPKPDDGRKSFLMKRGDVIDYSSSGVSTNDASPLDPITEEDEKSDQSGSKLLPGKKSSERSSLFQTDLKLKGSGLRYQKLPSDEDESGTEESDNTPLLKDDKDRKAEGKVERVPKSPEHSAEPIRTFIKAKEYLSDALLDKKDSSDSGVRSSESSPNHSLHNEVADDSQLEKANLIELEDDSHSGKRGIPHSLSGLQDPIIARMSICSEDKKSPSECSLIASSPEENWPACQKAYNLNRTPSTVTLNNNSAPANRANQNFDEMEGIRETSQVILRPSSSPNPTTIQNENLKSMTHKRSQRSSYTRLSKDPPELHAAASSESTGFGEERESIL.

Over 1-499 the chain is Cytoplasmic; it reads MSVLISQSVI…QIEPLFQFSW (499 aa). 12 ANK repeats span residues 4-33, 37-66, 70-99, 103-132, 136-165, 169-198, 202-231, 235-264, 268-297, 301-330, 334-363, and 367-396; these read LISQSVINYVEEENIPALKALLEKCKDVDE, CGQTPLMIAAEQGNLEIVKELIKNGANCNL, DNWTALISASKEGHVHIVEELLKCGVNLEH, GGWTALMWACYKGRTDVVELLLSHGANPSV, YSVYPIIWAAGRGHADIVHLLLQNGAKVNC, YGTTPLVWAARKGHLECVKHLLAMGADVDQ, NSMTALIVAVKGGYTQSVKEILKRNPNVNL, DGNTALMIASKEGHTEIVQDLLDAGTYVNI, SGDTVLIGAVRGGHVEIVRALLQKYADIDI, DNKTALYWAVEKGNATMVRDILQCNPDTEI, DGETPLIKATKMRNIEVVELLLDKGAKVSA, and KGDTPLHIAIRGRSRKLAELLLRNPKDGRL. The KAP NTPase domain maps to 440-953; that stretch reads YDLYSSALAD…NIVSVTGRLL (514 aa). The helical transmembrane segment at 500–520 threads the bilayer; that stretch reads LIVFLTLLLCGGLGLLFAFTV. Topologically, residues 521–524 are extracellular; sequence HPNL. The chain crosses the membrane as a helical span at residues 525 to 545; sequence GIAVSLSFLALLYIFFIVIYF. The Cytoplasmic portion of the chain corresponds to 546–659; the sequence is GGRREGESWN…KWKKTCCLPS (114 aa). The helical transmembrane segment at 660-680 threads the bilayer; the sequence is FVIFLFIIGCIISGITLLAIF. Topologically, residues 681–685 are extracellular; the sequence is RVDPK. A helical membrane pass occupies residues 686–706; that stretch reads HLTVNAVLISIASVVGLAFVL. The Cytoplasmic segment spans residues 707 to 1771; the sequence is NCRTWWQVLD…GFGEERESIL (1065 aa). Serine 882 and serine 885 each carry phosphoserine. Threonine 914 carries the phosphothreonine modification. Residue serine 918 is modified to Phosphoserine. Positions 1089–1092 are mediates interaction with CRKL; that stretch reads PRAP. Serine 1163 carries the post-translational modification Phosphoserine. 4 disordered regions span residues 1182–1202, 1285–1310, 1344–1368, and 1397–1564; these read DAAEGLSSPTDSSRGSGPAPG, PEDPRFLSESSSGPAPHGEPARRASH, RHSNLSWQSQTRRTPSLSSLNSQDS, and LEGG…EPIR. Phosphoserine occurs at positions 1296, 1352, 1359, 1361, 1362, and 1365. A compositionally biased stretch (polar residues) spans 1346–1358; the sequence is SNLSWQSQTRRTP. Over residues 1359–1368 the composition is skewed to low complexity; the sequence is SLSSLNSQDS. Residues 1403 to 1430 are compositionally biased toward polar residues; it reads STTISGRSSPHSTYYMGQSSSGGSIHSN. A compositionally biased stretch (basic and acidic residues) spans 1431-1457; the sequence is LEQEKGKDSEPKPDDGRKSFLMKRGDV. Positions 1460–1470 are enriched in polar residues; it reads YSSSGVSTNDA. Serine 1521, serine 1526, serine 1555, and serine 1574 each carry phosphoserine. The span at 1522 to 1532 shows a compositional bias: acidic residues; that stretch reads DEDESGTEESD. Residues 1537–1561 are compositionally biased toward basic and acidic residues; that stretch reads LKDDKDRKAEGKVERVPKSPEHSAE. Residues 1578-1633 form a disordered region; it reads LDKKDSSDSGVRSSESSPNHSLHNEVADDSQLEKANLIELEDDSHSGKRGIPHSLS. Low complexity predominate over residues 1585 to 1594; sequence DSGVRSSESS. 2 positions are modified to phosphoserine: serine 1623 and serine 1633. Position 1679 is a phosphothreonine (threonine 1679). Serine 1681 carries the phosphoserine modification. Position 1684 is a phosphothreonine (threonine 1684). The segment covering 1713 to 1731 has biased composition (polar residues); it reads LRPSSSPNPTTIQNENLKS. Residues 1713–1771 form a disordered region; that stretch reads LRPSSSPNPTTIQNENLKSMTHKRSQRSSYTRLSKDPPELHAAASSESTGFGEERESIL. The PDZ-binding signature appears at 1766-1771; it reads ERESIL.

In terms of assembly, found in a complex, at least composed of KIDINS220, MAGI2, NTRK1 and RAPGEF2; the complex is mainly formed at late endosomes in a nerve growth factor (NGF)-dependent manner. Interacts with RAPGEF2; the interaction is strengthened after NGF stimulation. Isoform 2 interacts (via C-terminal domain) with MAGI2 isoform 1 (via PDZ domain). Interacts with NTRK1, NTRK2, NTRK3, ERKL and NGFR. Can form a ternary complex with NGFR and NTRK1 and this complex is affected by the expression levels of KIDINS220/ARMS. An increase in KIDINS220/ARMS expression leads to a decreased association of NGFR and NTRK1. Interacts (via PDZ-binding motif) with SNTA1 and SNTB2 (via PDZ domains). Interacts with EPHA4 and PRKD1. In terms of processing, tyrosine phosphorylated by NTRK1, NTRK2, EPHB2 and EPHA4. Phosphorylation at Ser-918 is induced by phorbol ester treatment. Phosphorylation by NTRK2 is induced by brain-derived neurotrophic factor (BDNF) and neurotrophin-4/5. Phosphorylation by NTRK1 is induced by nerve growth factor (NGF). Abundant in developing and adult neural tissues as well as neuroendocrine cells and dendritic cells. Overexpressed in melanoma and melanoma cell lines.

Its subcellular location is the membrane. The protein localises to the late endosome. In terms of biological role, promotes a prolonged MAP-kinase signaling by neurotrophins through activation of a Rap1-dependent mechanism. Provides a docking site for the CRKL-C3G complex, resulting in Rap1-dependent sustained ERK activation. May play an important role in regulating postsynaptic signal transduction through the syntrophin-mediated localization of receptor tyrosine kinases such as EPHA4. In cooperation with SNTA1 can enhance EPHA4-induced JAK/STAT activation. Plays a role in nerve growth factor (NGF)-induced recruitment of RAPGEF2 to late endosomes and neurite outgrowth. May play a role in neurotrophin- and ephrin-mediated neuronal outgrowth and in axon guidance during neural development and in neuronal regeneration. Modulates stress-induced apoptosis of melanoma cells via regulation of the MEK/ERK signaling pathway. The polypeptide is Kinase D-interacting substrate of 220 kDa (KIDINS220) (Homo sapiens (Human)).